Consider the following 236-residue polypeptide: uncharacterized protein (236 aa).

It to E.coli YfjP and YkfA.

This is an uncharacterized protein from Escherichia coli (strain K12).